Consider the following 288-residue polypeptide: Protoheme IX farnesyltransferase (288 aa).

9 consecutive transmembrane segments (helical) span residues 6 to 26 (VILY…LLSL), 44 to 64 (FLDS…NNVI), 89 to 109 (LAIL…VKFI), 111 to 131 (VVCF…YSFF), 138 to 158 (ISTI…YCSV), 169 to 189 (LLIM…ILHF), 213 to 233 (IILH…INSI), 238 to 258 (LIIS…ELTI), and 268 to 288 (IFRW…FGFV).

This sequence belongs to the UbiA prenyltransferase family. Protoheme IX farnesyltransferase subfamily.

Its subcellular location is the cell membrane. The catalysed reaction is heme b + (2E,6E)-farnesyl diphosphate + H2O = Fe(II)-heme o + diphosphate. It functions in the pathway porphyrin-containing compound metabolism; heme O biosynthesis; heme O from protoheme: step 1/1. Functionally, converts heme B (protoheme IX) to heme O by substitution of the vinyl group on carbon 2 of heme B porphyrin ring with a hydroxyethyl farnesyl side group. The protein is Protoheme IX farnesyltransferase of Buchnera aphidicola subsp. Baizongia pistaciae (strain Bp).